A 2003-amino-acid polypeptide reads, in one-letter code: Neurogenic locus notch homolog protein 4 (2003 aa).

The N-terminal stretch at methionine 1–proline 23 is a signal peptide. EGF-like domains follow at residues arginine 24–glutamine 63, phenylalanine 64–glutamine 115, leucine 118–glutamine 155, and leucine 156–glutamate 192. At arginine 24–tryptophan 1447 the chain is on the extracellular side. 48 disulfides stabilise this stretch: cysteine 28–cysteine 41, cysteine 35–cysteine 51, cysteine 53–cysteine 62, cysteine 68–cysteine 80, cysteine 74–cysteine 103, cysteine 105–cysteine 114, cysteine 122–cysteine 133, cysteine 127–cysteine 143, cysteine 145–cysteine 154, cysteine 160–cysteine 171, cysteine 165–cysteine 180, cysteine 182–cysteine 191, cysteine 198–cysteine 211, cysteine 205–cysteine 220, cysteine 222–cysteine 231, cysteine 238–cysteine 249, cysteine 243–cysteine 262, cysteine 264–cysteine 273, cysteine 280–cysteine 291, cysteine 285–cysteine 300, cysteine 302–cysteine 311, cysteine 318–cysteine 332, cysteine 326–cysteine 341, cysteine 343–cysteine 352, cysteine 359–cysteine 370, cysteine 364–cysteine 379, cysteine 381–cysteine 390, cysteine 396–cysteine 407, cysteine 401–cysteine 418, cysteine 420–cysteine 429, cysteine 436–cysteine 452, cysteine 446–cysteine 461, cysteine 463–cysteine 472, cysteine 479–cysteine 490, cysteine 484–cysteine 499, cysteine 501–cysteine 510, cysteine 517–cysteine 528, cysteine 522–cysteine 537, cysteine 539–cysteine 548, cysteine 555–cysteine 566, cysteine 560–cysteine 575, cysteine 577–cysteine 586, cysteine 593–cysteine 604, cysteine 598–cysteine 613, cysteine 615–cysteine 624, cysteine 629–cysteine 640, cysteine 634–cysteine 649, and cysteine 651–cysteine 658. Residues aspartate 194–glutamate 232 form the EGF-like 5; calcium-binding domain. Positions arginine 234–glutamate 274 constitute an EGF-like 6 domain. Residues asparagine 276–serine 312 enclose the EGF-like 7; calcium-binding domain. One can recognise an EGF-like 8; calcium-binding domain in the interval aspartate 314–glutamate 353. Positions asparagine 355–histidine 391 constitute an EGF-like 9; calcium-binding domain. Positions leucine 392–histidine 430 constitute an EGF-like 10 domain. In terms of domain architecture, EGF-like 11; calcium-binding spans aspartate 432–glutamate 473. One can recognise an EGF-like 12; calcium-binding domain in the interval aspartate 475–glutamate 511. Positions glutamate 513–glutamate 549 constitute an EGF-like 13; calcium-binding domain. The EGF-like 14; calcium-binding domain occupies aspartate 551 to glutamine 587. The EGF-like 15; calcium-binding domain occupies glutamate 589–glutamate 625. EGF-like domains follow at residues valine 626–alanine 659, proline 661–glutamate 689, glutamate 691–serine 727, glutamate 729–glutamine 765, serine 767–glutamate 803, leucine 806–glutamine 842, leucine 844–asparagine 880, proline 882–glutamine 928, histidine 930–serine 966, glutamate 968–glutamate 1004, aspartate 1006–glutamate 1044, glutamate 1046–serine 1085, arginine 1087–leucine 1126, and alanine 1130–glutamine 1171. N-linked (GlcNAc...) asparagine glycosylation occurs at asparagine 664. Intrachain disulfides connect cysteine 665-cysteine 672, cysteine 667-cysteine 677, cysteine 679-cysteine 688, cysteine 695-cysteine 706, cysteine 700-cysteine 715, cysteine 717-cysteine 726, cysteine 733-cysteine 744, cysteine 738-cysteine 753, cysteine 755-cysteine 764, cysteine 771-cysteine 782, cysteine 776-cysteine 791, cysteine 793-cysteine 802, cysteine 810-cysteine 821, cysteine 815-cysteine 830, cysteine 832-cysteine 841, cysteine 848-cysteine 859, cysteine 853-cysteine 868, cysteine 870-cysteine 879, cysteine 886-cysteine 907, cysteine 901-cysteine 916, cysteine 918-cysteine 927, cysteine 934-cysteine 945, cysteine 939-cysteine 954, cysteine 956-cysteine 965, cysteine 972-cysteine 983, cysteine 977-cysteine 992, cysteine 994-cysteine 1003, cysteine 1010-cysteine 1023, cysteine 1015-cysteine 1032, cysteine 1034-cysteine 1043, cysteine 1050-cysteine 1061, cysteine 1055-cysteine 1073, cysteine 1075-cysteine 1084, cysteine 1091-cysteine 1102, cysteine 1096-cysteine 1114, cysteine 1116-cysteine 1125, cysteine 1134-cysteine 1146, cysteine 1140-cysteine 1159, cysteine 1161-cysteine 1170, cysteine 1178-cysteine 1191, cysteine 1187-cysteine 1203, cysteine 1214-cysteine 1238, cysteine 1220-cysteine 1233, cysteine 1229-cysteine 1245, cysteine 1251-cysteine 1277, cysteine 1259-cysteine 1272, and cysteine 1268-cysteine 1284. A glycan (N-linked (GlcNAc...) asparagine) is linked at asparagine 714. Asparagine 964 carries N-linked (GlcNAc...) asparagine glycosylation. N-linked (GlcNAc...) asparagine glycosylation occurs at asparagine 1143. LNR repeat units follow at residues cysteine 1170–glycine 1213, cysteine 1214–alanine 1250, and cysteine 1251–glycine 1294. Positions alanine 1347–glycine 1371 are disordered. A helical transmembrane segment spans residues proline 1448–leucine 1468. The Cytoplasmic segment spans residues glutamine 1469–lysine 2003. The segment at proline 1485 to serine 1508 is disordered. Basic residues predominate over residues arginine 1489–proline 1502. 5 ANK repeats span residues threonine 1633 to arginine 1665, alanine 1666 to threonine 1698, aspartate 1700 to lysine 1732, tryptophan 1733 to asparagine 1765, and arginine 1766 to glutamine 1798. Disordered stretches follow at residues leucine 1900–proline 1927 and proline 1968–lysine 2003.

This sequence belongs to the NOTCH family. As to quaternary structure, heterodimer of a C-terminal fragment N(TM) and a N-terminal fragment N(EC) which are probably linked by disulfide bonds. Interacts with MAML1, MAML2 and MAML3 which act as transcriptional coactivators for NOTCH4. (Microbial infection) Interacts with Epstein-Barr virus (EBV) RK-BARF0. Synthesized in the endoplasmic reticulum as an inactive form which is proteolytically cleaved by a furin-like convertase in the trans-Golgi network before it reaches the plasma membrane to yield an active, ligand-accessible form. Cleavage results in a C-terminal fragment N(TM) and a N-terminal fragment N(EC). Following ligand binding, it is cleaved by TNF-alpha converting enzyme (TACE) to yield a membrane-associated intermediate fragment called notch extracellular truncation (NEXT). This fragment is then cleaved by presenilin dependent gamma-secretase to release a notch-derived peptide containing the intracellular domain (NICD) from the membrane. In terms of processing, phosphorylated. As to expression, highly expressed in the heart, moderately in the lung and placenta and at low levels in the liver, skeletal muscle, kidney, pancreas, spleen, lymph node, thymus, bone marrow and fetal liver. No expression was seen in adult brain or peripheral blood leukocytes.

Its subcellular location is the cell membrane. It is found in the nucleus. Its function is as follows. Functions as a receptor for membrane-bound ligands Jagged1, Jagged2 and Delta1 to regulate cell-fate determination. Upon ligand activation through the released notch intracellular domain (NICD) it forms a transcriptional activator complex with RBPJ/RBPSUH and activates genes of the enhancer of split locus. Affects the implementation of differentiation, proliferation and apoptotic programs. May regulate branching morphogenesis in the developing vascular system. This is Neurogenic locus notch homolog protein 4 from Homo sapiens (Human).